We begin with the raw amino-acid sequence, 197 residues long: Putative protein N5-glutamine methyltransferase MJ0928 (197 aa).

S-adenosyl-L-methionine-binding positions include 42-46, aspartate 64, and asparagine 105; that span reads GVGTG. Residue 105–108 participates in substrate binding; it reads NPPY.

The protein belongs to the eukaryotic/archaeal PrmC-related family.

The catalysed reaction is L-glutaminyl-[protein] + S-adenosyl-L-methionine = N(5)-methyl-L-glutaminyl-[protein] + S-adenosyl-L-homocysteine + H(+). In terms of biological role, putative protein methyltransferase using S-adenosyl-L-methionine as the methyl donor. May methylate a Gln residue in target proteins. The sequence is that of Putative protein N5-glutamine methyltransferase MJ0928 from Methanocaldococcus jannaschii (strain ATCC 43067 / DSM 2661 / JAL-1 / JCM 10045 / NBRC 100440) (Methanococcus jannaschii).